Consider the following 981-residue polypeptide: NAD(+) hydrolase tir-1 (981 aa).

Disordered regions lie at residues 1–31 (MLPN…RSLK), 74–128 (QNEQ…PTQP), and 173–225 (LSTP…PVDQ). 2 stretches are compositionally biased toward polar residues: residues 12 to 23 (PSFQSLNNNNQR) and 74 to 85 (QNEQDGETTSTD). Acidic residues predominate over residues 87 to 97 (AFFELDDDDDL). Low complexity predominate over residues 98 to 114 (SSPSVPGSPVDPPSISV). Residues 115 to 128 (PLPPKSAPPCPTQP) show a composition bias toward pro residues. Over residues 182 to 200 (EEMHNGQVRKESEYRRFKS) the composition is skewed to basic and acidic residues. SAM domains lie at 614 to 678 (WTCA…LKVA) and 684 to 750 (VDES…AKHP). Residues 760-857 (KQIDVFISYR…EHQKNIIPIF (98 aa)) enclose the TIR domain. 769–770 (RR) is a binding site for NAD(+). Residue E842 is part of the active site. Composition is skewed to polar residues over residues 908–939 (TTPT…TGPS), 954–963 (FTPTGSQERA), and 972–981 (PSASTTSDRN). The segment at 908–981 (TTPTTKEMPS…PSASTTSDRN (74 aa)) is disordered.

The protein belongs to the SARM1 family. As to quaternary structure, homodimer. Interacts with rab-1, pal-1 and unc-43. In terms of tissue distribution, highly expressed in hypodermis. Localizes to postsynaptic regions of axons.

It is found in the cytoplasm. The catalysed reaction is NAD(+) + H2O = ADP-D-ribose + nicotinamide + H(+). NAD(+) hydrolase, which plays a key role in non-apoptotic cell death by regulating NAD(+) metabolism. In response to stress, homooligomerizes and catalyzes cleavage of NAD(+) into ADP-D-ribose (ADPR) and nicotinamide; NAD(+) cleavage promoting non-apoptotic neuronal cell death. In males, involved in non-apoptotic death of the linker cell which guides gonad elongation during larval development. Required for both innate immune response and specification of AWC(OFF) neuron. During late embryogenesis, it acts downstream of CAMKII (unc-43) to regulate specification of asymmetric odorant receptors in AWC(OFF) neuron via the nsy-1/ASK1 pmk-1/p38 MAP kinase signaling cascade. Required to localize nsy-1 to postsynaptic regions of AWC neuron, suggesting that it may act by assembling a signaling complex that regulate odorant receptor expression. Also plays a central role in resistance to infection to a broad range of bacterial and fungi pathogens, possibly by activating pmk-1, independently of the NF-kappa-B pathway. Required for expression of antimicrobial peptides nlp-29 and nlp-31. Its role in immune response and neuron specification may be mediated by the same nsy-1/ASK1 pmk-1/p38 MAP kinase cascade signaling pathway. Involved in the response to anoxic conditions probably by activating the p38 pathway composed of nsy-1/sek-1/pmk-1. Involved in regulation of the serotonergic response of ADF neurons to pathogenic food. In addition, plays a role in the up-regulation of gcs-1 upon arsenite treatment, most likely through activation of pmk-1, to confer protection against toxicity induced by heavy metals. In terms of biological role, regulates expression of antimicrobial peptide nlp-29 in response to fungal infection or physical injury. The protein is NAD(+) hydrolase tir-1 of Caenorhabditis elegans.